Reading from the N-terminus, the 144-residue chain is 3-hydroxyacyl-[acyl-carrier-protein] dehydratase FabZ (144 aa).

His51 is a catalytic residue.

The protein belongs to the thioester dehydratase family. FabZ subfamily.

Its subcellular location is the cytoplasm. It catalyses the reaction a (3R)-hydroxyacyl-[ACP] = a (2E)-enoyl-[ACP] + H2O. In terms of biological role, involved in unsaturated fatty acids biosynthesis. Catalyzes the dehydration of short chain beta-hydroxyacyl-ACPs and long chain saturated and unsaturated beta-hydroxyacyl-ACPs. This Clostridium botulinum (strain Okra / Type B1) protein is 3-hydroxyacyl-[acyl-carrier-protein] dehydratase FabZ.